Here is a 121-residue protein sequence, read N- to C-terminus: Protein FAM241B (121 aa).

The segment at 12-58 is disordered; sequence QDDDPRVRTTTQPPRGSIPRQSFFNRGHGAPPGGPGPRQQQAGARLG. A compositionally biased stretch (polar residues) spans 19–35; sequence RTTTQPPRGSIPRQSFF. Ser33 is modified (phosphoserine). A compositionally biased stretch (low complexity) spans 48–58; that stretch reads PRQQQAGARLG. Position 62 is a phosphoserine (Ser62). A helical membrane pass occupies residues 92–112; the sequence is ILLLFLLMMLGVRGLLLVGLV.

It belongs to the FAM241 family.

It is found in the membrane. Its function is as follows. May play a role in lysosome homeostasis. This chain is Protein FAM241B, found in Homo sapiens (Human).